Reading from the N-terminus, the 386-residue chain is SWI/SNF-related matrix-associated actin-dependent regulator of chromatin subfamily B member 1 (386 aa).

The interval 1–114 is DNA-binding; sequence MMMMALSKTF…DEKYKAVSIS (114 aa).

It belongs to the SNF5 family. Component of the multiprotein chromatin-remodeling complexes SWI/SNF. Component of neural progenitors-specific chromatin remodeling complex (npBAF complex) and the neuron-specific chromatin remodeling complex (nBAF complex). Component of the BAF (SWI/SNF) chromatin remodeling complex. Component of the SWI/SNF-B (PBAF) chromatin remodeling complex. Binds to double-stranded DNA.

It is found in the nucleus. Functionally, involved in chromatin-remodeling. Core component of the BAF (SWI/SNF) complex. This ATP-dependent chromatin-remodeling complex plays important roles in cell proliferation and differentiation, in cellular antiviral activities and inhibition of tumor formation. Belongs to the neural progenitors-specific chromatin remodeling complex (npBAF complex) and the neuron-specific chromatin remodeling complex (nBAF complex) and may play a role in neural development. The chain is SWI/SNF-related matrix-associated actin-dependent regulator of chromatin subfamily B member 1 (SMARCB1) from Gallus gallus (Chicken).